A 23-amino-acid chain; its full sequence is Basic phospholipase A2 homolog (23 aa).

Contains 7 disulfide bonds. In terms of tissue distribution, expressed by the venom gland.

The protein localises to the secreted. This chain is Basic phospholipase A2 homolog, found in Trimeresurus stejnegeri (Chinese green tree viper).